The chain runs to 134 residues: Retinoid-binding protein 7 (134 aa).

This sequence belongs to the calycin superfamily. Fatty-acid binding protein (FABP) family. In terms of tissue distribution, highly expressed in white adipose tissue and mammary gland.

The protein localises to the cytoplasm. Intracellular transport of retinol. The polypeptide is Retinoid-binding protein 7 (Rbp7) (Mus musculus (Mouse)).